Here is a 350-residue protein sequence, read N- to C-terminus: DNA repair protein RAD51 homolog 2 (350 aa).

Positions 1 to 75 (MSSKKLRRVG…TAYELKTRRS (75 aa)) are interaction with RAD51C. 108–115 (GPPGCGKT) lines the ATP pocket.

It belongs to the RecA family. RAD51 subfamily. As to quaternary structure, part of the BCDX2 complex consisting of RAD51B, RAD51C, RAD51D and XRCC2; the complex has a ring-like structure arranged into a flat disc around a central channel. The BCDX2 subcomplex RAD51B:RAD51C interacts with RAD51. Interacts with SWSAP1; involved in homologous recombination repair. Interacts with HELQ. Post-translationally, phosphorylated on tyrosine residues by BCR-ABL. As to expression, expressed in a wide range of tissues.

The protein resides in the nucleus. Functionally, involved in the homologous recombination repair (HRR) pathway of double-stranded DNA breaks arising during DNA replication or induced by DNA-damaging agents. May promote the assembly of presynaptic RAD51 nucleoprotein filaments. Binds single-stranded DNA and double-stranded DNA and has DNA-dependent ATPase activity. Part of the RAD51 paralog protein complex BCDX2 which acts in the BRCA1-BRCA2-dependent HR pathway. Upon DNA damage, BCDX2 acts downstream of BRCA2 recruitment and upstream of RAD51 recruitment. BCDX2 binds predominantly to the intersection of the four duplex arms of the Holliday junction and to junction of replication forks. The BCDX2 complex was originally reported to bind single-stranded DNA, single-stranded gaps in duplex DNA and specifically to nicks in duplex DNA. The BCDX2 subcomplex RAD51B:RAD51C exhibits single-stranded DNA-dependent ATPase activity suggesting an involvement in early stages of the HR pathway. The chain is DNA repair protein RAD51 homolog 2 (Rad51b) from Mus musculus (Mouse).